The sequence spans 479 residues: Cardiolipin synthase A (479 aa).

2 consecutive transmembrane segments (helical) span residues 8 to 28 (FFGY…LHAV) and 38 to 58 (IAWA…YLVF). 2 consecutive PLD phosphodiesterase domains span residues 218–245 (VNFR…GDEY) and 392–419 (QPGF…DNRS). Residues His-223, Lys-225, Asp-230, His-397, Lys-399, and Asp-404 contribute to the active site.

Belongs to the phospholipase D family. Cardiolipin synthase subfamily. ClsA sub-subfamily.

Its subcellular location is the cell inner membrane. It catalyses the reaction 2 a 1,2-diacyl-sn-glycero-3-phospho-(1'-sn-glycerol) = a cardiolipin + glycerol. Its function is as follows. Catalyzes the reversible phosphatidyl group transfer from one phosphatidylglycerol molecule to another to form cardiolipin (CL) (diphosphatidylglycerol) and glycerol. This Pseudomonas putida (strain GB-1) protein is Cardiolipin synthase A.